Consider the following 74-residue polypeptide: Capsid protein VP2 (74 aa).

It localises to the virion. This extremely basic protein may tightly bind to SSV1 DNA. Essential for virus function. This Saccharolobus solfataricus (Sulfolobus solfataricus) protein is Capsid protein VP2 (VP2).